The sequence spans 264 residues: Apolipoprotein A-I (264 aa).

Positions 1–18 (MKAVVLAVALVFLTGSQA) are cleaved as a signal peptide. Tandem repeats lie at residues 67 to 88 (LNLL…ERLG) and 89 to 110 (PLTR…QEMN). Residues 67–264 (LNLLENWDTL…DKARETLTAQ (198 aa)) are 10 X approximate tandem repeats. At Met109 the chain carries Methionine sulfoxide. The stretch at 111–121 (KDLEEVKQNVQ) is one 3; half-length repeat. Tandem repeats lie at residues 122 to 143 (PYLD…QRVA), 144 to 165 (PLGA…GKLS), and 166 to 187 (PVAE…TQLA). The 7; truncated repeat unit spans residues 188-207 (PHSDKLRESLAQRLAELKSN). Repeat 8 spans residues 208–229 (PTLNEYHTRAKTHLNTFGEKAR). The 9; half-length repeat unit spans residues 230–240 (PALEDLRHTLI). The stretch at 241–264 (PILDTLKTKVKSVIDKARETLTAQ) is repeat 10.

This sequence belongs to the apolipoprotein A1/A4/E family. Homodimer. Interacts with APOA1BP and CLU. Component of a sperm activating protein complex (SPAP), consisting of APOA1, an immunoglobulin heavy chain, an immunoglobulin light chain and albumin. Interacts with NDRG1. Interacts with SCGB3A2. Interacts with NAXE and YJEFN3. Glycosylated. Post-translationally, palmitoylated. In terms of processing, phosphorylation sites are present in the extracellular medium.

It is found in the secreted. Participates in the reverse transport of cholesterol from tissues to the liver for excretion by promoting cholesterol efflux from tissues and by acting as a cofactor for the lecithin cholesterol acyltransferase (LCAT). As part of the SPAP complex, activates spermatozoa motility. The protein is Apolipoprotein A-I (Apoa1) of Mus pahari (Gairdner's shrew-mouse).